Reading from the N-terminus, the 161-residue chain is Respiratory growth induced protein 1 (161 aa).

Residue Lys-68 forms a Glycyl lysine isopeptide (Lys-Gly) (interchain with G-Cter in ubiquitin) linkage.

The protein belongs to the RGI1 family.

It is found in the cell membrane. Functionally, involved in the control of energetic metabolism and significantly contribute to cell fitness, especially under respiratory growth conditions. This is Respiratory growth induced protein 1 (RGI1) from Saccharomyces cerevisiae (strain RM11-1a) (Baker's yeast).